An 89-amino-acid polypeptide reads, in one-letter code: Small ribosomal subunit protein bS20 (89 aa).

This sequence belongs to the bacterial ribosomal protein bS20 family.

Functionally, binds directly to 16S ribosomal RNA. This is Small ribosomal subunit protein bS20 from Xanthobacter autotrophicus (strain ATCC BAA-1158 / Py2).